The chain runs to 937 residues: Diacylglycerol kinase theta (937 aa).

The interval Met1 to Ile48 is disordered. A phosphoserine mark is found at Ser22 and Ser26. Phorbol-ester/DAG-type zinc fingers lie at residues Gly54–Cys102, Ala115–Cys162, and His177–Cys228. The tract at residues Gly359 to Val378 is disordered. In terms of domain architecture, Ras-associating spans Thr390–Ala489. 2 short sequence motifs (LXXLL motif) span residues Leu550 to Ala554 and Leu569 to Leu573. Positions Pro579–Ala716 constitute a DAGKc domain. The segment at Ala911–Leu937 is disordered.

Belongs to the eukaryotic diacylglycerol kinase family. As to quaternary structure, interacts with RHOA (constitutively activated, GTP-bound); the interaction inhibits DGKQ. Interacts with PRKCE. Interacts with PRKCH. Interacts with PLCB1. Interacts with NR5A1; the interaction requires both LXXLL motifs in DGKQ and is required for full phosphatidic acid-mediated activation of NR5A1. Phosphorylated by PRKCE and PRKCH in vitro. As to expression, widely expressed with higher expression in the brain and, to a lesser extent, in the small intestine, duodenum, and liver. In brain, expressed in gray matter. Expression is most intense in the cerebellar cortex and hippocampus, while moderate expression is seen in the olfactory bulb neuronal layers and brain stem nuclei. In the cerebellar cortex, equally expressed in both the Purkinje cell somata and the granule cells.

It is found in the cytoplasm. The protein resides in the cytosol. Its subcellular location is the cell membrane. It localises to the synapse. The protein localises to the cytoskeleton. It is found in the nucleus. The protein resides in the nucleus speckle. Its subcellular location is the nucleus matrix. The catalysed reaction is a 1,2-diacyl-sn-glycerol + ATP = a 1,2-diacyl-sn-glycero-3-phosphate + ADP + H(+). The enzyme catalyses a 1-O-alkyl-sn-glycerol + ATP = a 1-O-alkyl-sn-glycero-3-phosphate + ADP + H(+). It carries out the reaction 1-O-alkyl-2-acyl-sn-glycerol + ATP = 1-O-alkyl-2-acyl-sn-glycero-3-phosphate + ADP + H(+). It catalyses the reaction 1,2-di-(9Z-octadecenoyl)-sn-glycerol + ATP = 1,2-di-(9Z-octadecenoyl)-sn-glycero-3-phosphate + ADP + H(+). The catalysed reaction is 1-O-hexadecyl-sn-glycerol + ATP = 1-O-hexadecyl-sn-glycero-3-phosphate + ADP + H(+). The enzyme catalyses 1-O-hexadecyl-2-acetyl-sn-glycerol + ATP = 1-O-hexadecyl-2-acetyl-sn-glycero-3-phosphate + ADP + H(+). It carries out the reaction 1-octadecanoyl-2-(5Z,8Z,11Z,14Z-eicosatetraenoyl)-sn-glycerol + ATP = 1-octadecanoyl-2-(5Z,8Z,11Z,14Z-eicosatetraenoyl)-sn-glycero-3-phosphate + ADP + H(+). Its pathway is lipid metabolism; glycerolipid metabolism. Its activity is regulated as follows. Activated by phosphatidylserine. In terms of biological role, diacylglycerol kinase that converts diacylglycerol/DAG into phosphatidic acid/phosphatidate/PA and regulates the respective levels of these two bioactive lipids. Thereby, acts as a central switch between the signaling pathways activated by these second messengers with different cellular targets and opposite effects in numerous biological processes. Within the adrenocorticotropic hormone signaling pathway, produces phosphatidic acid which in turn activates NR5A1 and subsequent steroidogenic gene transcription. Also functions downstream of the nerve growth factor signaling pathway being specifically activated in the nucleus by the growth factor. Through its diacylglycerol activity also regulates synaptic vesicle endocytosis. The sequence is that of Diacylglycerol kinase theta from Rattus norvegicus (Rat).